Here is a 456-residue protein sequence, read N- to C-terminus: Alcohol acyltransferase 16 (456 aa).

Residues H167 and D382 each act as proton acceptor in the active site.

The protein belongs to the plant acyltransferase family. In terms of tissue distribution, expressed in fruit.

It carries out the reaction 3-(methylsulfanyl)propanoyl-CoA + butan-1-ol = butyl 3-(methylsulfanyl)propanoate + CoA. The catalysed reaction is ethanol + benzoyl-CoA = ethyl benzoate + CoA. The enzyme catalyses butan-1-ol + benzoyl-CoA = butyl benzoate + CoA. It catalyses the reaction 2-(methylsulfanyl)acetyl-CoA + butan-1-ol = butyl 2-(methylsulfanyl)acetate + CoA. Involved in the biosynthesis of volatile esters which confer kiwifruit flavor. Alcohol acyl transferase that can use a wide range of alcohols as substrate to produce esters. Exhibits benzoyl-CoA:alcohol O-acyltransferase activity. This is Alcohol acyltransferase 16 from Actinidia chinensis var. chinensis (Chinese soft-hair kiwi).